The sequence spans 294 residues: 4-hydroxy-tetrahydrodipicolinate synthase (294 aa).

T45 lines the pyruvate pocket. Catalysis depends on Y133, which acts as the Proton donor/acceptor. K161 functions as the Schiff-base intermediate with substrate in the catalytic mechanism. I203 contributes to the pyruvate binding site.

Belongs to the DapA family. As to quaternary structure, homotetramer; dimer of dimers.

It localises to the cytoplasm. It carries out the reaction L-aspartate 4-semialdehyde + pyruvate = (2S,4S)-4-hydroxy-2,3,4,5-tetrahydrodipicolinate + H2O + H(+). The protein operates within amino-acid biosynthesis; L-lysine biosynthesis via DAP pathway; (S)-tetrahydrodipicolinate from L-aspartate: step 3/4. Its function is as follows. Catalyzes the condensation of (S)-aspartate-beta-semialdehyde [(S)-ASA] and pyruvate to 4-hydroxy-tetrahydrodipicolinate (HTPA). The sequence is that of 4-hydroxy-tetrahydrodipicolinate synthase from Alcanivorax borkumensis (strain ATCC 700651 / DSM 11573 / NCIMB 13689 / SK2).